Here is a 478-residue protein sequence, read N- to C-terminus: FERM domain-containing protein B (478 aa).

3 disordered regions span residues 19 to 39, 129 to 196, and 202 to 221; these read ELIPTQSQGSPSLSSSSTITS, EENS…GFLT, and KAQSPQLQSQSSSLSTTIAS. Composition is skewed to low complexity over residues 22 to 39 and 129 to 164; these read PTQSQGSPSLSSSSTITS and EENSPSSSTSSPILSGLSSIRGKKSNASSTSNANDG. Positions 48–468 constitute an FERM domain; it reads VLIRIYFIDD…DWSEEWESKE (421 aa). Gly residues predominate over residues 165–179; sequence SGSGSGSGSGSGSGS. 2 stretches are compositionally biased toward low complexity: residues 180-189 and 204-216; these read GTSTPNSPKG and QSPQLQSQSSSLS.

In Dictyostelium discoideum (Social amoeba), this protein is FERM domain-containing protein B (frmB).